The chain runs to 448 residues: Glutamyl-tRNA(Gln) amidotransferase subunit D (448 aa).

Residues 92 to 423 (SEVKIISTGG…DKIRSLMLTN (332 aa)) enclose the Asparaginase/glutaminase domain. Catalysis depends on residues T102, T178, D179, and K257.

Belongs to the asparaginase 1 family. GatD subfamily. Heterodimer of GatD and GatE.

It catalyses the reaction L-glutamyl-tRNA(Gln) + L-glutamine + ATP + H2O = L-glutaminyl-tRNA(Gln) + L-glutamate + ADP + phosphate + H(+). Allows the formation of correctly charged Gln-tRNA(Gln) through the transamidation of misacylated Glu-tRNA(Gln) in organisms which lack glutaminyl-tRNA synthetase. The reaction takes place in the presence of glutamine and ATP through an activated gamma-phospho-Glu-tRNA(Gln). The GatDE system is specific for glutamate and does not act on aspartate. This is Glutamyl-tRNA(Gln) amidotransferase subunit D from Sulfurisphaera tokodaii (strain DSM 16993 / JCM 10545 / NBRC 100140 / 7) (Sulfolobus tokodaii).